The following is a 384-amino-acid chain: 5-amino-6-(D-ribitylamino)uracil--L-tyrosine 4-hydroxyphenyl transferase 2 (384 aa).

One can recognise a Radical SAM core domain in the interval 53-286; it reads VSYVVNRNIY…IAISRIILHT (234 aa). The [4Fe-4S] cluster site is built by cysteine 67, cysteine 71, and cysteine 74.

This sequence belongs to the radical SAM superfamily. CofH family. Consists of two subunits, CofG and CofH. [4Fe-4S] cluster serves as cofactor.

The catalysed reaction is 5-amino-6-(D-ribitylamino)uracil + L-tyrosine + S-adenosyl-L-methionine = 5-amino-5-(4-hydroxybenzyl)-6-(D-ribitylimino)-5,6-dihydrouracil + 2-iminoacetate + 5'-deoxyadenosine + L-methionine + H(+). It participates in cofactor biosynthesis; coenzyme F0 biosynthesis. Its function is as follows. Catalyzes the radical-mediated synthesis of 5-amino-5-(4-hydroxybenzyl)-6-(D-ribitylimino)-5,6-dihydrouracil from 5-amino-6-(D-ribitylamino)uracil and L-tyrosine. This is 5-amino-6-(D-ribitylamino)uracil--L-tyrosine 4-hydroxyphenyl transferase 2 from Methanosarcina acetivorans (strain ATCC 35395 / DSM 2834 / JCM 12185 / C2A).